We begin with the raw amino-acid sequence, 74 residues long: Antimicrobial peptide AcrAP1 (74 aa).

The signal sequence occupies residues 1–22; that stretch reads MEIKYLLTVFLVLLIVSDHCQA. At Lys40 the chain carries Lysine amide. A propeptide spanning residues 46–74 is cleaved from the precursor; it reads DLDGQIDRFRNFRKRDAELEELLSKLPIY.

This sequence belongs to the non-disulfide-bridged peptide (NDBP) superfamily. Short antimicrobial peptide (group 4) family. As to expression, expressed by the venom gland.

The protein resides in the secreted. Its subcellular location is the target cell membrane. Its function is as follows. Has antimicrobial activity against the Gram-positive bacteria S.aureus (MIC=8 uM) and the yeast C.albicans (MIC=16 uM). Causes hemolysis on horse erythrocytes (64 uM for 100% hemolysis). Minimum bactericidal concentrations have also been tested against S.aureus and is four-fold higher (MBC=32 uM). The sequence is that of Antimicrobial peptide AcrAP1 from Androctonus crassicauda (Arabian fat-tailed scorpion).